A 559-amino-acid chain; its full sequence is Membrane protein insertase YidC (559 aa).

6 consecutive transmembrane segments (helical) span residues 5–25 (IVNLVAAIVLSLGIIFGWQYF), 332–352 (AIDFGWFYIITKPVFYAMNFF), 355–375 (YVGNFGISILIVTVIIKLLMF), 429–449 (LPILVQIPVFFSIYKVLYVTI), 474–494 (LFGLLHFSLPSFLMIGAWPIL), and 520–540 (FMPLVFLVMFSSFPAGLLIYW).

This sequence belongs to the OXA1/ALB3/YidC family. Type 1 subfamily. In terms of assembly, interacts with the Sec translocase complex via SecD. Specifically interacts with transmembrane segments of nascent integral membrane proteins during membrane integration.

The protein localises to the cell inner membrane. In terms of biological role, required for the insertion and/or proper folding and/or complex formation of integral membrane proteins into the membrane. Involved in integration of membrane proteins that insert both dependently and independently of the Sec translocase complex, as well as at least some lipoproteins. Aids folding of multispanning membrane proteins. The chain is Membrane protein insertase YidC from Rickettsia bellii (strain OSU 85-389).